The sequence spans 274 residues: Small ribosomal subunit protein uS3 (274 aa).

The region spanning 38-106 is the KH type-2 domain; that stretch reads IRRLLSSGLE…QVQLNILEVK (69 aa). Residues 215 to 274 are disordered; sequence AAAAPAGADRPRRERPSGTRPRRSGASGTTATGTDAGRAAGGEEAAPDAAAPVEAQSTES. The span at 238–266 shows a compositional bias: low complexity; it reads SGASGTTATGTDAGRAAGGEEAAPDAAAP.

It belongs to the universal ribosomal protein uS3 family. Part of the 30S ribosomal subunit. Forms a tight complex with proteins S10 and S14.

Its function is as follows. Binds the lower part of the 30S subunit head. Binds mRNA in the 70S ribosome, positioning it for translation. In Mycobacterium tuberculosis (strain ATCC 25177 / H37Ra), this protein is Small ribosomal subunit protein uS3.